A 337-amino-acid chain; its full sequence is Glyceraldehyde-3-phosphate dehydrogenase (337 aa).

Residues 11-12 (TV), 34-35 (TR), and glycine 110 contribute to the NADP(+) site. A D-glyceraldehyde 3-phosphate-binding site is contributed by 139-141 (SCN). Catalysis depends on cysteine 140, which acts as the Nucleophile. Aspartate 171 lines the NADP(+) pocket. 194 to 195 (HG) is a binding site for D-glyceraldehyde 3-phosphate. Glutamine 300 contacts NADP(+).

Belongs to the glyceraldehyde-3-phosphate dehydrogenase family. In terms of assembly, homotetramer.

It is found in the cytoplasm. It catalyses the reaction D-glyceraldehyde 3-phosphate + phosphate + NADP(+) = (2R)-3-phospho-glyceroyl phosphate + NADPH + H(+). The enzyme catalyses D-glyceraldehyde 3-phosphate + phosphate + NAD(+) = (2R)-3-phospho-glyceroyl phosphate + NADH + H(+). Its pathway is carbohydrate degradation; glycolysis; pyruvate from D-glyceraldehyde 3-phosphate: step 1/5. In terms of biological role, exhibits a dual-cofactor specificity, with a marked preference for NADP(+) over NAD(+). This chain is Glyceraldehyde-3-phosphate dehydrogenase (gap), found in Methanothermus fervidus.